A 394-amino-acid polypeptide reads, in one-letter code: Venom metalloproteinase antarease-like TtrivMP_A (394 aa).

The signal sequence occupies residues 1–16 (MISYLASIFLLATVSA). Positions 17-158 (VPSGRVEVVF…AENVSRMAEE (142 aa)) are excised as a propeptide. Residue asparagine 151 is glycosylated (N-linked (GlcNAc...) asparagine). The Peptidase M12B domain maps to 162-390 (IVVEYYIVTD…KPTAFCIFEQ (229 aa)). Cysteine 295 and cysteine 386 are joined by a disulfide. Histidine 319 serves as a coordination point for Zn(2+). The active site involves glutamate 320. Positions 323 and 329 each coordinate Zn(2+).

It belongs to the venom metalloproteinase (M12B) family. Zn(2+) serves as cofactor. In terms of tissue distribution, expressed by the venom gland.

The protein resides in the secreted. With respect to regulation, inhibited by EDTA. Its function is as follows. Acts as a metalloprotease. Penetrates intact tissue and specifically cleaves the vesicle-associated membrane protein 2 (VAMP2) (part of the SNARE complex) involved in pancreatic secretion, thus disrupting the normal vesicular traffic. This is Venom metalloproteinase antarease-like TtrivMP_A from Tityus trivittatus (Argentinean scorpion).